We begin with the raw amino-acid sequence, 222 residues long: V-type ATP synthase subunit D (222 aa).

Belongs to the V-ATPase D subunit family.

Produces ATP from ADP in the presence of a proton gradient across the membrane. In Acetivibrio thermocellus (strain ATCC 27405 / DSM 1237 / JCM 9322 / NBRC 103400 / NCIMB 10682 / NRRL B-4536 / VPI 7372) (Clostridium thermocellum), this protein is V-type ATP synthase subunit D.